The chain runs to 407 residues: GTPase Obg (407 aa).

Residues 1 to 159 (MKFVDEVSIR…RDLKLELKVL (159 aa)) form the Obg domain. The disordered stretch occupies residues 127–149 (NTRFKSSTNRAPRQTTPGKPGDQ). The segment covering 129 to 143 (RFKSSTNRAPRQTTP) has biased composition (polar residues). An OBG-type G domain is found at 160–333 (ADVGLLGLPN…LTRDIMRYLE (174 aa)). Residues 166-173 (GLPNAGKS), 191-195 (FTTLV), 213-216 (DIPG), 283-286 (NKCD), and 314-316 (SAI) contribute to the GTP site. The Mg(2+) site is built by S173 and T193. Residues 376–407 (SGVKSVHDIGDDDWDEEDVDDEDGPEIIYVRD) are disordered. Over residues 385 to 400 (GDDDWDEEDVDDEDGP) the composition is skewed to acidic residues.

The protein belongs to the TRAFAC class OBG-HflX-like GTPase superfamily. OBG GTPase family. Monomer. Requires Mg(2+) as cofactor.

The protein localises to the cytoplasm. An essential GTPase which binds GTP, GDP and possibly (p)ppGpp with moderate affinity, with high nucleotide exchange rates and a fairly low GTP hydrolysis rate. Plays a role in control of the cell cycle, stress response, ribosome biogenesis and in those bacteria that undergo differentiation, in morphogenesis control. The chain is GTPase Obg from Pseudomonas savastanoi pv. phaseolicola (strain 1448A / Race 6) (Pseudomonas syringae pv. phaseolicola (strain 1448A / Race 6)).